The following is a 157-amino-acid chain: Ribonuclease (157 aa).

The N-terminal stretch at 1 to 34 (MMKMEGIALKKRLSWISVCLLVLVSAAGMLFSTA) is a signal peptide. A propeptide spanning residues 35–47 (AKTETSSHKAHTE) is cleaved from the precursor. Catalysis depends on Glu120, which acts as the Proton acceptor. Catalysis depends on His149, which acts as the Proton donor.

Belongs to the ribonuclease N1/T1 family.

It is found in the secreted. Functionally, hydrolyzes phosphodiester bonds in RNA, poly- and oligoribonucleotides resulting in 3'-nucleoside monophosphates via 2',3'-cyclophosphate intermediates. This is Ribonuclease from Bacillus amyloliquefaciens (Bacillus velezensis).